The sequence spans 111 residues: Secreted transmembrane peptide 5 (111 aa).

The first 46 residues, Met1 to Ser46, serve as a signal peptide directing secretion. Positions Ile66 to Pro79 match the SCOOP motif motif. Positions Ser72 to Ser74 match the SxS motif essential for MIK2 binding motif. The interval Thr89–Pro111 is disordered.

Belongs to the serine rich endogenous peptide (SCOOP) phytocytokine family. As to quaternary structure, interacts with MIK2 (via extracellular leucine-rich repeat domain); this interaction triggers the formation of complex between MIK2 and the BAK1/SERK3 and SERK4 coreceptors, and subsequent BAK1 activation by phosphorylation. In terms of tissue distribution, mostly expressed in leaves, and, to a lower extent, in roots, stems, siliques, seeds and flowers.

The protein resides in the cell membrane. It localises to the secreted. It is found in the extracellular space. Its subcellular location is the apoplast. Functionally, brassicaceae-specific phytocytokine (plant endogenous peptide released into the apoplast) perceived by MIK2 in a BAK1/SERK3 and SERK4 coreceptors-dependent manner, that modulates various physiological and antimicrobial processes including growth prevention and reactive oxygen species (ROS) response regulation. This chain is Secreted transmembrane peptide 5, found in Arabidopsis thaliana (Mouse-ear cress).